We begin with the raw amino-acid sequence, 82 residues long: Putative Fe(2+) transport protein A (82 aa).

It belongs to the FeoA family.

In terms of biological role, might be involved in Fe(2+) ion uptake. This is Putative Fe(2+) transport protein A from Leptolyngbya boryana (Plectonema boryanum).